The primary structure comprises 502 residues: T-complex protein 11-like X-linked protein 1 (502 aa).

Residues 1-36 (MPKTEETVLQNDPSVAENGAPEPKTPGQSQKSKSFC) form a disordered region.

Belongs to the TCP11 family.

This is T-complex protein 11-like X-linked protein 1 from Homo sapiens (Human).